Here is a 207-residue protein sequence, read N- to C-terminus: Large ribosomal subunit protein uL4 (207 aa).

Positions 52–77 are disordered; it reads RGWADVSGGGRKPWRQKGTGRARAGS.

Belongs to the universal ribosomal protein uL4 family. Part of the 50S ribosomal subunit.

One of the primary rRNA binding proteins, this protein initially binds near the 5'-end of the 23S rRNA. It is important during the early stages of 50S assembly. It makes multiple contacts with different domains of the 23S rRNA in the assembled 50S subunit and ribosome. Its function is as follows. Forms part of the polypeptide exit tunnel. In Moorella thermoacetica (strain ATCC 39073 / JCM 9320), this protein is Large ribosomal subunit protein uL4.